We begin with the raw amino-acid sequence, 99 residues long: Small ribosomal subunit protein bS21 (99 aa).

The segment at 60–99 is disordered; the sequence is KKLQREGLLPMKPKPVFGAGPGGDRRGPGAGPGAGPRPAR.

This sequence belongs to the bacterial ribosomal protein bS21 family.

This Rhodopseudomonas palustris (strain BisA53) protein is Small ribosomal subunit protein bS21.